The sequence spans 697 residues: Putative cryptochrome DASH (697 aa).

In terms of domain architecture, Photolyase/cryptochrome alpha/beta spans 5 to 164 (KLLVYLLRRD…GFKLWHDEKY (160 aa)). Disordered regions lie at residues 170–215 (DNGL…FPSW) and 554–697 (FSVT…PPHI). Basic and acidic residues predominate over residues 188 to 198 (KTQEPLRERPR). A compositionally biased stretch (basic residues) spans 560 to 569 (RGNRRPYRWR). The span at 578 to 590 (GRGGRGGGTGNTS) shows a compositional bias: gly residues. Composition is skewed to low complexity over residues 659–675 (QQQQ…YAHQ) and 683–697 (RQQQ…PPHI).

The protein belongs to the DNA photolyase class-1 family. FAD serves as cofactor. The cofactor is (6R)-5,10-methylene-5,6,7,8-tetrahydrofolate.

In terms of biological role, may have a photoreceptor function. This Gibberella zeae (strain ATCC MYA-4620 / CBS 123657 / FGSC 9075 / NRRL 31084 / PH-1) (Wheat head blight fungus) protein is Putative cryptochrome DASH.